Reading from the N-terminus, the 425-residue chain is MLDLKRIRTDFDTVAAKLKNRGVSEDTLTHLKELDEKRRTLLVQSEELKAERNIASAAIAQAKRQKEDATQQIADMQKVSADIKTIDNQLVAIDQQVADIITVLPNTPHDSVPVGADEEDNVEIRRWGTPRDFDFEVKAHWDLGEDLDILDWERGAKVTGARFLFYKNLGARLERALYNFMLDEHIKEGYQEIITPYMVNHDSMFGTGQYPKFKEDTFELADTNFVLIPTAEVPLTNYYRGEILDGKELPIYFTAMSPSFRSEAGSAGRDTRGLIRLHQFHKVEMVKFAKPEESYQELEKMTANAENILQKLGLPYRVISLCTGDMGFSAAKTYDLEVWIPAQNTYREISSCSNTEDFQARRAQIRYRDEADGKVKLLHTLNGSGLAVGRTVAAILENYQNEDGSVTIPEVLRPYMGGETVISPK.

An L-serine-binding site is contributed by 230 to 232 (TAE). 261 to 263 (RSE) contacts ATP. L-serine is bound at residue glutamate 284. 348–351 (EISS) contacts ATP. Serine 384 lines the L-serine pocket.

This sequence belongs to the class-II aminoacyl-tRNA synthetase family. Type-1 seryl-tRNA synthetase subfamily. In terms of assembly, homodimer. The tRNA molecule binds across the dimer.

It localises to the cytoplasm. The catalysed reaction is tRNA(Ser) + L-serine + ATP = L-seryl-tRNA(Ser) + AMP + diphosphate + H(+). The enzyme catalyses tRNA(Sec) + L-serine + ATP = L-seryl-tRNA(Sec) + AMP + diphosphate + H(+). The protein operates within aminoacyl-tRNA biosynthesis; selenocysteinyl-tRNA(Sec) biosynthesis; L-seryl-tRNA(Sec) from L-serine and tRNA(Sec): step 1/1. Its function is as follows. Catalyzes the attachment of serine to tRNA(Ser). Is also able to aminoacylate tRNA(Sec) with serine, to form the misacylated tRNA L-seryl-tRNA(Sec), which will be further converted into selenocysteinyl-tRNA(Sec). The sequence is that of Serine--tRNA ligase from Streptococcus pyogenes serotype M6 (strain ATCC BAA-946 / MGAS10394).